An 898-amino-acid polypeptide reads, in one-letter code: Zinc finger protein 574 (898 aa).

3 C2H2-type zinc fingers span residues 16–38 (YVCS…QNSH), 76–98 (YQCL…QELH), and 126–148 (YECV…RQTH). Residue serine 164 is modified to Phosphoserine. The C2H2-type 4 zinc finger occupies 213–235 (YKCSECSQLFQMPADFLEHQATH). The interval 243 to 305 (AEEPATQQET…PRRSSSGESG (63 aa)) is disordered. Over residues 273-290 (HSYELRNELRNGEAMGRD) the composition is skewed to basic and acidic residues. Serine 301 is modified (phosphoserine). 4 C2H2-type zinc fingers span residues 310-332 (LFCS…LRSH), 337-359 (FKCP…LGDH), 365-387 (FLCV…RRAH), and 393-414 (HSCP…RRTH). Positions 417 to 460 (GGVPLPTTPVPPEEPAISFPEPAPAETGELEAPELPVSEESSAE) are disordered. 6 C2H2-type zinc fingers span residues 467 to 490 (YRCL…RFVH), 496 to 518 (HKCS…LRTH), 524 to 546 (FPCP…RLTH), 552 to 574 (YRCG…RLVH), 580 to 602 (YRCQ…RYHH), and 608 to 631 (YKCR…LVVH). The C2H2-type 15; degenerate zinc finger occupies 637–660 (HRCPSCGAAFPSSLRLREHRCAAA). The C2H2-type 16 zinc finger occupies 668-690 (FECGTCGKKVGSAARLQAHEAAH). Residues 691 to 735 (AAAGPGEVLAKEPPAPRAARATRTPVAPSPTALGGTTSAAPAAPA) are disordered. Positions 707-734 (RAARATRTPVAPSPTALGGTTSAAPAAP) are enriched in low complexity. The residue at position 719 (serine 719) is a Phosphoserine. Threonine 726 carries the phosphothreonine modification. 4 consecutive C2H2-type zinc fingers follow at residues 740–762 (LECS…RRIH), 768–790 (YPCP…RRLH), 796–818 (FACE…RRIH), and 824–846 (YSCP…RKTH). Arginine 834 carries the asymmetric dimethylarginine modification.

The protein belongs to the krueppel C2H2-type zinc-finger protein family.

It is found in the nucleus. In terms of biological role, may be involved in transcriptional regulation. This is Zinc finger protein 574 (Znf574) from Rattus norvegicus (Rat).